The chain runs to 598 residues: Aspartate--tRNA(Asp/Asn) ligase (598 aa).

L-aspartate is bound at residue Glu177. The tract at residues 201–204 (QIFK) is aspartate. L-aspartate-binding residues include Arg223 and His451. 223–225 (RDE) contacts ATP. Glu485 is a binding site for ATP. Arg492 serves as a coordination point for L-aspartate. 537 to 540 (GVDR) contacts ATP.

Belongs to the class-II aminoacyl-tRNA synthetase family. Type 1 subfamily. As to quaternary structure, homodimer.

Its subcellular location is the cytoplasm. It carries out the reaction tRNA(Asx) + L-aspartate + ATP = L-aspartyl-tRNA(Asx) + AMP + diphosphate. In terms of biological role, aspartyl-tRNA synthetase with relaxed tRNA specificity since it is able to aspartylate not only its cognate tRNA(Asp) but also tRNA(Asn). Reaction proceeds in two steps: L-aspartate is first activated by ATP to form Asp-AMP and then transferred to the acceptor end of tRNA(Asp/Asn). The sequence is that of Aspartate--tRNA(Asp/Asn) ligase from Anaplasma phagocytophilum (strain HZ).